The following is a 289-amino-acid chain: Pantoate kinase (289 aa).

The protein belongs to the GHMP kinase family. PoK subfamily.

The catalysed reaction is (R)-pantoate + ATP = (R)-4-phosphopantoate + ADP + H(+). The protein operates within cofactor biosynthesis; coenzyme A biosynthesis. In terms of biological role, phosphorylates (R)-pantoate to form (R)-4-phosphopantoate in the CoA biosynthesis pathway. ATP is the best phosphate donor. Can be replaced with UTP, with lower efficiency. This Methanospirillum hungatei JF-1 (strain ATCC 27890 / DSM 864 / NBRC 100397 / JF-1) protein is Pantoate kinase.